The primary structure comprises 60 residues: Colanic acid capsular biosynthesis activation protein B (60 aa).

The sequence is that of Colanic acid capsular biosynthesis activation protein B (rcsB) from Klebsiella aerogenes (Enterobacter aerogenes).